Reading from the N-terminus, the 425-residue chain is Kynureninase (425 aa).

Pyridoxal 5'-phosphate is bound by residues L105, T106, 133 to 136, D218, H221, and Y243; that span reads FPSD. K244 is modified (N6-(pyridoxal phosphate)lysine). Residues W274 and N302 each contribute to the pyridoxal 5'-phosphate site.

This sequence belongs to the kynureninase family. In terms of assembly, homodimer. The cofactor is pyridoxal 5'-phosphate.

It carries out the reaction L-kynurenine + H2O = anthranilate + L-alanine + H(+). The catalysed reaction is 3-hydroxy-L-kynurenine + H2O = 3-hydroxyanthranilate + L-alanine + H(+). Its pathway is amino-acid degradation; L-kynurenine degradation; L-alanine and anthranilate from L-kynurenine: step 1/1. The protein operates within cofactor biosynthesis; NAD(+) biosynthesis; quinolinate from L-kynurenine: step 2/3. Its function is as follows. Catalyzes the cleavage of L-kynurenine (L-Kyn) and L-3-hydroxykynurenine (L-3OHKyn) into anthranilic acid (AA) and 3-hydroxyanthranilic acid (3-OHAA), respectively. The polypeptide is Kynureninase (Christiangramia forsetii (strain DSM 17595 / CGMCC 1.15422 / KT0803) (Gramella forsetii)).